The sequence spans 622 residues: MSTDNKQSLPSITLAAIGVVYGDIGTSPLYTLRECLSGQFGFGVERDAVFGFLSLIFWLLIFVVSIKYLTFVMRADNAGEGGILTLMSLAGRNTSARTTSMLVIMGLIGGSFFYGEVVITPAISVMSAIEGLEIVAPQLDTWIVPLSIIVLTLLFMIQKHGTGMVGKLFAPIMLTWFLILAVLGLRSIIANPEVLHALNPVWAVRFFLEYKTVSFIALGAVVLSITGVEALYADMGHFGKFPIRLAWFTVVLPSLVLNYFGQGALLLKHPEAIKNPFFLLAPDWALIPLLILAALATVIASQAVISGVFSLTRQAVRLGYLSPMRIIHTSEMESGQIYIPFVNWLLYFAVVVVIVSFEHSSNLAAAYGIAVTGTMVLTSILSTTVARKNWHWNKYFVALILIAFLCVDIPLFSANLDKLLSGGWLPLSLGLIMFTIMTTWKSERFRLLRRMHEHGNSLEAMIASLEKSPPVRVPGTAVYMSRALSVIPFALLHNLKHNKVLHERVILLTLRTEDAPYVHNVRRVQIEQLSPTFWRVVASYGWRETPNVEEVFHRCGLEGLSCRMMETSFFMSHESLIVGKRPWYLRLRGKLYLLLQRNALRAPDQFEIPPNRVIELGTQVEI.

12 helical membrane passes run 12–32, 49–69, 103–123, 137–157, 165–185, 213–233, 247–267, 276–296, 337–357, 363–383, 396–416, and 419–439; these read ITLA…LYTL, VFGF…IKYL, VIMG…TPAI, PQLD…LFMI, VGKL…VLGL, VSFI…ALYA, WFTV…ALLL, PFFL…AALA, IYIP…IVSF, LAAA…ILST, FVAL…SANL, and LLSG…IMTT.

This sequence belongs to the HAK/KUP transporter (TC 2.A.72) family.

The protein resides in the cell inner membrane. It carries out the reaction K(+)(in) + H(+)(in) = K(+)(out) + H(+)(out). Its function is as follows. Responsible for the low-affinity transport of potassium into the cell. Likely operates as a K(+):H(+) symporter. This Salmonella gallinarum (strain 287/91 / NCTC 13346) protein is Low affinity potassium transport system protein Kup.